Here is a 491-residue protein sequence, read N- to C-terminus: UDP-N-acetylmuramoyl-L-alanyl-D-glutamate--2,6-diaminopimelate ligase (491 aa).

Residue S30 coordinates UDP-N-acetyl-alpha-D-muramoyl-L-alanyl-D-glutamate. Residue 108 to 114 (GTNGKTT) participates in ATP binding. UDP-N-acetyl-alpha-D-muramoyl-L-alanyl-D-glutamate contacts are provided by residues N149, 150 to 151 (TT), S177, Q183, and R185. At K217 the chain carries N6-carboxylysine. Meso-2,6-diaminopimelate contacts are provided by residues R383, 407-410 (DNPR), G458, and E462. Residues 407 to 410 (DNPR) carry the Meso-diaminopimelate recognition motif motif.

The protein belongs to the MurCDEF family. MurE subfamily. Requires Mg(2+) as cofactor. Post-translationally, carboxylation is probably crucial for Mg(2+) binding and, consequently, for the gamma-phosphate positioning of ATP.

The protein resides in the cytoplasm. The catalysed reaction is UDP-N-acetyl-alpha-D-muramoyl-L-alanyl-D-glutamate + meso-2,6-diaminopimelate + ATP = UDP-N-acetyl-alpha-D-muramoyl-L-alanyl-gamma-D-glutamyl-meso-2,6-diaminopimelate + ADP + phosphate + H(+). Its pathway is cell wall biogenesis; peptidoglycan biosynthesis. Catalyzes the addition of meso-diaminopimelic acid to the nucleotide precursor UDP-N-acetylmuramoyl-L-alanyl-D-glutamate (UMAG) in the biosynthesis of bacterial cell-wall peptidoglycan. This chain is UDP-N-acetylmuramoyl-L-alanyl-D-glutamate--2,6-diaminopimelate ligase, found in Listeria innocua serovar 6a (strain ATCC BAA-680 / CLIP 11262).